The following is a 288-amino-acid chain: 33 kDa chaperonin (288 aa).

2 disulfide bridges follow: Cys233–Cys235 and Cys267–Cys270.

It belongs to the HSP33 family. In terms of processing, under oxidizing conditions two disulfide bonds are formed involving the reactive cysteines. Under reducing conditions zinc is bound to the reactive cysteines and the protein is inactive.

Its subcellular location is the cytoplasm. In terms of biological role, redox regulated molecular chaperone. Protects both thermally unfolding and oxidatively damaged proteins from irreversible aggregation. Plays an important role in the bacterial defense system toward oxidative stress. In Pasteurella multocida (strain Pm70), this protein is 33 kDa chaperonin.